A 23-amino-acid chain; its full sequence is Alyteserin-1d (23 aa).

An Asparagine amide modification is found at Asn-23.

Expressed by the skin glands.

Its subcellular location is the secreted. It localises to the target cell membrane. Antibacterial peptide with amphipathic alpha-helical structure. Shows selective growth inhibitory activity against the Gram-negative bacteria E.coli (MIC=25 uM) Has a weak hemolytic activity against human erythrocytes (LC(50)&gt;100 uM). Is very weakly active against S.aureus (MIC=200 uM). The chain is Alyteserin-1d from Alytes obstetricans (Common midwife toad).